The primary structure comprises 1036 residues: Protein translocase subunit SecA, chloroplastic (1036 aa).

A chloroplast-targeting transit peptide spans 1-76 (MESCARSASQ…KIGELMQVRA (76 aa)). 186 to 193 (MRTGEGKT) is an ATP binding site. Residues 995-1036 (NQEQQQKGKPDSSNVENKRIGDANLNPVSVTESPSSDSPQNT) form a disordered region. Positions 1000–1015 (QKGKPDSSNVENKRIG) are enriched in basic and acidic residues. Over residues 1020 to 1036 (NPVSVTESPSSDSPQNT) the composition is skewed to polar residues.

This sequence belongs to the SecA family.

The protein localises to the plastid. The protein resides in the chloroplast stroma. It localises to the chloroplast thylakoid membrane. It catalyses the reaction ATP + H2O + chloroplast-proteinSide 1 = ADP + phosphate + chloroplast-proteinSide 2.. Has a central role in coupling the hydrolysis of ATP to the transfer of proteins across the thylakoid membrane. In Spinacia oleracea (Spinach), this protein is Protein translocase subunit SecA, chloroplastic.